The chain runs to 393 residues: Envelope glycoprotein D (393 aa).

A signal peptide spans 1 to 25 (MGGAAARLGAVILFVVIVGLHGVRG). Positions 25-57 (GKYALADASLKMADPNRFRGKDLPVLDQLTDPP) are interaction with TNFRSF14. Residues 26–338 (KYALADASLK…PYHPPATPNN (313 aa)) lie on the Virion surface side of the membrane. Zn(2+) is bound at residue H64. 3 disulfide bridges follow: C90–C213, C130–C226, and C142–C151. 2 N-linked (GlcNAc...) asparagine; by host glycosylation sites follow: N118 and N145. D239 contributes to the Zn(2+) binding site. Residues 260-304 (LKIAGWHGPRAPYTSTLLPPELPETPNATQPELAPEDPEDSALLE) are profusion. The tract at residues 273–300 (TSTLLPPELPETPNATQPELAPEDPEDS) is disordered. N-linked (GlcNAc...) asparagine; by host glycosylation is present at N286. Residues 339-363 (MGLIAGAVGGSLLAALVICGIVYWM) traverse the membrane as a helical segment. The Intravirion portion of the chain corresponds to 364–393 (RRRTRKAPKRIRLPHIREDDQPSSHQPLFY).

It belongs to the herpesviridae glycoprotein D family. As to quaternary structure, homodimer. Interacts with host receptor TNFRSF14. Interacts with host receptor NECTIN1. Interacts (via profusion domain) with gB; this interaction occurs in the absence of gH/gL. Interacts (via profusion domain) with gH/gL heterodimer; this interaction occurs in the absence of gB. Associates with the gB-gH/gL-gD complex. Interacts (via C-terminus) with UL11 tegument protein. Interacts with host RSAD2.

The protein localises to the virion membrane. It is found in the host Golgi apparatus. Its function is as follows. Envelope glycoprotein that binds to the host cell entry receptors NECTIN1, TNFRSF14/HVEM and 3-O-sulfated heparan sulfate, promoting the virus entry into host cells. May trigger fusion with host membrane, by recruiting the fusion machinery composed of gB and gH/gL. The chain is Envelope glycoprotein D (gD) from Homo sapiens (Human).